The following is a 499-amino-acid chain: Putative antiporter subunit mnhD2 (499 aa).

14 helical membrane-spanning segments follow: residues 1-21 (MSNLIILPMLLPFVCALILVF), 31-51 (ILSITTMIVNTMISIALLIYV), 77-97 (LSLLMVSVSSFVVTLIMAYGF), 107-127 (FHLPTFILLLTVGVIGSFLTS), 129-149 (LFNLYVMFEIMLLASFVLVTL), 160-180 (IVYVVLNILGSWLLLLGIGML), 208-228 (ISLVFLVAFSSKAALVIFMWL), 239-259 (LAALFAALMTKVGAYALIRFF), 272-292 (TLLVFMACITMIIGAFGVIAY), 307-327 (IGFIILGLGSHTISGVNGAIF), 329-349 (LANDIIVKTLLFFVIGSLVYM), 367-387 (FFGVAFVVVIFAIGGVPPFSG), 402-422 (GNYIGLALMIVTSLIAMYSLF), and 449-469 (GLLSVLVVVVLAMGIAAPVVL).

The protein belongs to the CPA3 antiporters (TC 2.A.63) subunit D family. In terms of assembly, may form a heterooligomeric complex that consists of seven subunits: mnhA2, mnhB2, mnhC2, mnhD2, mnhE2, mnhF2 and mnhG2.

The protein localises to the cell membrane. This chain is Putative antiporter subunit mnhD2 (mnhD2), found in Staphylococcus epidermidis (strain ATCC 35984 / DSM 28319 / BCRC 17069 / CCUG 31568 / BM 3577 / RP62A).